The primary structure comprises 478 residues: Sodium-coupled neutral amino acid transporter 5 (478 aa).

A disordered region spans residues 1 to 20 (MAISSAEGMELQDPKMNGAL). Topologically, residues 1 to 57 (MAISSAEGMELQDPKMNGALPGNAVEQEHEGFLPSHSPSPGRKPAQFMDFEGKTSFG) are cytoplasmic. Residues 58 to 80 (MSVFNLSNAIMGSGILGLAYAMA) form a helical membrane-spanning segment. Residues 81 to 93 (HTGILLFLALLLC) are Extracellular-facing. A helical membrane pass occupies residues 94–114 (IALLSSYSIHLLLTCAGVVGI). Residues 115–131 (RAYEQLGQRALGPAGKV) are Cytoplasmic-facing. Residues 132–152 (VVAAVICLHNVGAMSSYLFII) traverse the membrane as a helical segment. The Extracellular segment spans residues 153 to 172 (KSELPLVIATFLDMDPEGDW). Residues 173–193 (FLKGNLLIIIVSVLIILPLAL) form a helical membrane-spanning segment. Over 194 to 198 (MRHLG) the chain is Cytoplasmic. A helical membrane pass occupies residues 199–219 (YLGYTSGLSLTCMLFFLISVI). The Extracellular portion of the chain corresponds to 220 to 263 (YKKFQLGCTVGHNGTAVESKSSPSLPIHGLNTSCEAQMFTADSQ). Cys-227 and Cys-253 form a disulfide bridge. Asn-232 carries an N-linked (GlcNAc...) asparagine glycan. Residues 264-284 (MFYTVPIMAFAFVCHPEVLPI) form a helical membrane-spanning segment. The Cytoplasmic segment spans residues 285–301 (YTELCRPSKRRMQAVAN). The helical transmembrane segment at 302–322 (VSIGAMFCMYGLTATFGYLTF) threads the bilayer. The Extracellular portion of the chain corresponds to 323–340 (YSSVEAEMLHMYSQHDLL). Residues 341-361 (ILCVRLAVLLAVTLTVPVVLF) form a helical membrane-spanning segment. Residues 362 to 382 (PIRRALQQLLFPSKAFSWPRH) lie on the Cytoplasmic side of the membrane. A helical transmembrane segment spans residues 383 to 403 (VAIALILLVLVNVLVICVPTI). The Extracellular segment spans residues 404–405 (RD). A helical membrane pass occupies residues 406 to 426 (IFGVIGSTSAPSLIFILPSIF). Topologically, residues 427–445 (YLRIVPSEVEPLYSWPKIQ) are cytoplasmic. Residues 446 to 466 (ALCFGVLGVLFMAISLGFMFA) traverse the membrane as a helical segment. The Extracellular segment spans residues 467 to 478 (NWATGQSHVSGH).

The protein belongs to the amino acid/polyamine transporter 2 family.

The protein localises to the cell membrane. It carries out the reaction L-serine(out) + Na(+)(out) + H(+)(in) = L-serine(in) + Na(+)(in) + H(+)(out). The enzyme catalyses L-alanine(out) + Na(+)(out) + H(+)(in) = L-alanine(in) + Na(+)(in) + H(+)(out). It catalyses the reaction glycine(out) + Na(+)(out) + H(+)(in) = glycine(in) + Na(+)(in) + H(+)(out). The catalysed reaction is L-glutamine(out) + Na(+)(out) + H(+)(in) = L-glutamine(in) + Na(+)(in) + H(+)(out). It carries out the reaction L-asparagine(out) + Na(+)(out) + H(+)(in) = L-asparagine(in) + Na(+)(in) + H(+)(out). The enzyme catalyses L-histidine(out) + Na(+)(out) + H(+)(in) = L-histidine(in) + Na(+)(in) + H(+)(out). It catalyses the reaction L-cysteine(out) + Na(+)(out) + H(+)(in) = L-cysteine(in) + Na(+)(in) + H(+)(out). With respect to regulation, not inhibited by lithium. Partial allosteric regulation on ions sodium binding. Its function is as follows. Symporter that cotransports neutral amino acids and sodium ions, coupled to an H(+) antiporter activity. Releases L-glutamine and glycine from astroglial cells and may participate in the glutamate/GABA-glutamine cycle and the NMDA receptors activation. In addition contributes significantly to L-glutamine uptake in retina, namely in ganglion and Mueller cells and, therefore participates in the retinal glutamate-glutamine cycle. The transport activity is pH sensitive, Li(+) tolerant, bidirectional and associated with large uncoupled fluxes of protons. The transport is electroneutral coupled to the cotransport of 1 Na(+) and the antiport of 1 H(+). May have particular importance for modulation of net hepatic glutamine flux. The sequence is that of Sodium-coupled neutral amino acid transporter 5 from Bos taurus (Bovine).